Here is a 348-residue protein sequence, read N- to C-terminus: Anthranilate phosphoribosyltransferase (348 aa).

Residues G83, 86–87 (GD), T91, 93–96 (NVST), 111–119 (KHGNRAASS), and T123 contribute to the 5-phospho-alpha-D-ribose 1-diphosphate site. G83 provides a ligand contact to anthranilate. S95 serves as a coordination point for Mg(2+). N114 is an anthranilate binding site. R169 serves as a coordination point for anthranilate. Residues D227 and E228 each coordinate Mg(2+).

This sequence belongs to the anthranilate phosphoribosyltransferase family. As to quaternary structure, homodimer. Mg(2+) serves as cofactor.

The catalysed reaction is N-(5-phospho-beta-D-ribosyl)anthranilate + diphosphate = 5-phospho-alpha-D-ribose 1-diphosphate + anthranilate. It functions in the pathway amino-acid biosynthesis; L-tryptophan biosynthesis; L-tryptophan from chorismate: step 2/5. Its function is as follows. Catalyzes the transfer of the phosphoribosyl group of 5-phosphorylribose-1-pyrophosphate (PRPP) to anthranilate to yield N-(5'-phosphoribosyl)-anthranilate (PRA). This chain is Anthranilate phosphoribosyltransferase, found in Thermobifida fusca (strain YX).